We begin with the raw amino-acid sequence, 473 residues long: Photosystem II CP43 reaction center protein (473 aa).

Residues 1 to 14 (MKILYSLRRFYHVE) constitute a propeptide that is removed on maturation. T15 carries the N-acetylthreonine modification. Phosphothreonine is present on T15. A run of 5 helical transmembrane segments spans residues 69 to 93 (LFEV…PHLA), 134 to 155 (LLGP…KDRN), 178 to 200 (KALY…RKIT), 255 to 275 (KPFA…LSYS), and 291 to 312 (WFNN…ASQA). E367 contributes to the [CaMn4O5] cluster binding site. The helical transmembrane segment at 447–471 (RARAAAAGFEKGIDRDLEPVLYMTP) threads the bilayer.

This sequence belongs to the PsbB/PsbC family. PsbC subfamily. PSII is composed of 1 copy each of membrane proteins PsbA, PsbB, PsbC, PsbD, PsbE, PsbF, PsbH, PsbI, PsbJ, PsbK, PsbL, PsbM, PsbT, PsbX, PsbY, PsbZ, Psb30/Ycf12, at least 3 peripheral proteins of the oxygen-evolving complex and a large number of cofactors. It forms dimeric complexes. Requires Binds multiple chlorophylls and provides some of the ligands for the Ca-4Mn-5O cluster of the oxygen-evolving complex. It may also provide a ligand for a Cl- that is required for oxygen evolution. PSII binds additional chlorophylls, carotenoids and specific lipids. as cofactor.

The protein resides in the plastid. It is found in the chloroplast thylakoid membrane. Its function is as follows. One of the components of the core complex of photosystem II (PSII). It binds chlorophyll and helps catalyze the primary light-induced photochemical processes of PSII. PSII is a light-driven water:plastoquinone oxidoreductase, using light energy to abstract electrons from H(2)O, generating O(2) and a proton gradient subsequently used for ATP formation. In Oryza nivara (Indian wild rice), this protein is Photosystem II CP43 reaction center protein.